The primary structure comprises 377 residues: 3-dehydroquinate synthase (377 aa).

Residues 113 to 117 (GVIGD), 137 to 138 (TT), K150, and K159 each bind NAD(+). E192, H254, and H273 together coordinate Zn(2+).

This sequence belongs to the sugar phosphate cyclases superfamily. Dehydroquinate synthase family. Co(2+) serves as cofactor. The cofactor is Zn(2+). Requires NAD(+) as cofactor.

The protein localises to the cytoplasm. It catalyses the reaction 7-phospho-2-dehydro-3-deoxy-D-arabino-heptonate = 3-dehydroquinate + phosphate. The protein operates within metabolic intermediate biosynthesis; chorismate biosynthesis; chorismate from D-erythrose 4-phosphate and phosphoenolpyruvate: step 2/7. Its function is as follows. Catalyzes the conversion of 3-deoxy-D-arabino-heptulosonate 7-phosphate (DAHP) to dehydroquinate (DHQ). This is 3-dehydroquinate synthase from Bartonella tribocorum (strain CIP 105476 / IBS 506).